Here is a 319-residue protein sequence, read N- to C-terminus: Malate dehydrogenase (319 aa).

Residues Gly-7–Gly-13 and Asp-34 each bind NAD(+). Substrate-binding residues include Arg-81 and Arg-87. NAD(+) is bound by residues Asn-94 and Ile-117–Asn-119. Substrate-binding residues include Asn-119 and Arg-153. Residue His-177 is the Proton acceptor of the active site. Position 227 (Met-227) interacts with NAD(+).

Belongs to the LDH/MDH superfamily. MDH type 1 family. In terms of assembly, homodimer.

The enzyme catalyses (S)-malate + NAD(+) = oxaloacetate + NADH + H(+). Functionally, catalyzes the reversible oxidation of malate to oxaloacetate. The protein is Malate dehydrogenase of Psychromonas ingrahamii (strain DSM 17664 / CCUG 51855 / 37).